The chain runs to 439 residues: Iron-sulfur cluster assembly factor IBA57 homolog, mitochondrial (439 aa).

Residues 1–72 (MQPATRSIAV…RLISVSGPDA (72 aa)) constitute a mitochondrion transit peptide.

This sequence belongs to the GcvT family. CAF17/IBA57 subfamily.

The protein resides in the mitochondrion matrix. The polypeptide is Iron-sulfur cluster assembly factor IBA57 homolog, mitochondrial (caf-17) (Neurospora crassa (strain ATCC 24698 / 74-OR23-1A / CBS 708.71 / DSM 1257 / FGSC 987)).